The chain runs to 479 residues: Muscarinic acetylcholine receptor M4 (479 aa).

Residues 1-30 are Extracellular-facing; sequence MANFTPVNGSSANQSVRLVTTAHNHLETVE. N8 and N13 each carry an N-linked (GlcNAc...) asparagine glycan. A helical membrane pass occupies residues 31 to 53; that stretch reads MVFIATVTGSLSLVTVVGNILVM. At 54–67 the chain is on the cytoplasmic side; that stretch reads LSIKVNRQLQTVNN. A helical transmembrane segment spans residues 68–88; sequence YFLFSLACADLIIGAFSMNLY. Residues 89–105 lie on the Extracellular side of the membrane; sequence TLYIIKGYWPLGAVVCD. C104 and C184 are joined by a disulfide. The chain crosses the membrane as a helical span at residues 106–127; sequence LWLALDYVVSNASVMNLLIISF. The Cytoplasmic segment spans residues 128–147; that stretch reads DRYFCVTKPLTYPARRTTKM. The helical transmembrane segment at 148–170 threads the bilayer; that stretch reads AGLMIAAAWVLSFVLWAPAILFW. Residues 171–192 are Extracellular-facing; the sequence is QFVVGKRTVPDNQCFIQFLSNP. The chain crosses the membrane as a helical span at residues 193 to 215; it reads AVTFGTAIAAFYLPVVIMTVLYI. Topologically, residues 216–401 are cytoplasmic; it reads HISLASRSRV…AARERKVTRT (186 aa). The disordered stretch occupies residues 271-334; that stretch reads LEEAPPPALP…APTLQPRTLN (64 aa). Residues 274–285 are compositionally biased toward pro residues; sequence APPPALPPPPRP. Residues 293–303 show a composition bias toward polar residues; sequence NESSSGSATQN. Low complexity predominate over residues 310-333; sequence TELSTTEAATTPALPAPTLQPRTL. A helical transmembrane segment spans residues 402–422; the sequence is IFAILLAFILTWTPYNVMVLV. The Extracellular segment spans residues 423–436; sequence NTFCQSCIPERVWS. Residues 437–456 traverse the membrane as a helical segment; sequence IGYWLCYVNSTINPACYALC. Residues 457–479 are Cytoplasmic-facing; the sequence is NATFKKTFRHLLLCQYRNIGTAR. Residues T459, T463, and T477 each carry the phosphothreonine modification.

Belongs to the G-protein coupled receptor 1 family. Muscarinic acetylcholine receptor subfamily. CHRM4 sub-subfamily.

It is found in the cell membrane. It localises to the postsynaptic cell membrane. Its function is as follows. The muscarinic acetylcholine receptor mediates various cellular responses, including inhibition of adenylate cyclase, breakdown of phosphoinositides and modulation of potassium channels through the action of G proteins. Primary transducing effect is inhibition of adenylate cyclase. This chain is Muscarinic acetylcholine receptor M4 (Chrm4), found in Mus musculus (Mouse).